The following is a 274-amino-acid chain: 2,3,4,5-tetrahydropyridine-2,6-dicarboxylate N-succinyltransferase (274 aa).

It belongs to the transferase hexapeptide repeat family.

Its subcellular location is the cytoplasm. The catalysed reaction is (S)-2,3,4,5-tetrahydrodipicolinate + succinyl-CoA + H2O = (S)-2-succinylamino-6-oxoheptanedioate + CoA. Its pathway is amino-acid biosynthesis; L-lysine biosynthesis via DAP pathway; LL-2,6-diaminopimelate from (S)-tetrahydrodipicolinate (succinylase route): step 1/3. This is 2,3,4,5-tetrahydropyridine-2,6-dicarboxylate N-succinyltransferase from Leptothrix cholodnii (strain ATCC 51168 / LMG 8142 / SP-6) (Leptothrix discophora (strain SP-6)).